Reading from the N-terminus, the 342-residue chain is C-X-C chemokine receptor type 6 (342 aa).

The Extracellular portion of the chain corresponds to 1 to 32 (MAEHDYHEDYGFSSFNDSSQEEHQDFLQFSKV). Asn16 carries an N-linked (GlcNAc...) asparagine glycan. A helical transmembrane segment spans residues 33–59 (FLPCMYLVVFVCGLVGNSLVLVISIFY). Residues 60–68 (HKLQSLTDV) are Cytoplasmic-facing. A helical membrane pass occupies residues 69 to 89 (FLVNLPLADLVFVCTLPFWAY). Topologically, residues 90–103 (AGIHEWVFGQVMCK) are extracellular. Cys102 and Cys180 are joined by a disulfide. A helical transmembrane segment spans residues 104–125 (SLLGIYTINFYTSMLILTCITV). Residues 126–143 (DRFIVVVKATKAYNQQAK) lie on the Cytoplasmic side of the membrane. Residues 144-164 (RMTWGKVTSLLIWVISLLVSL) form a helical membrane-spanning segment. The Extracellular segment spans residues 165-187 (PQIIYGNVFNLDKLICGYHDEAI). A helical transmembrane segment spans residues 188–215 (STVVLATQMTLGFFLPLLTMIVCYSVII). Topologically, residues 216–231 (KTLLHAGGFQKHRSLK) are cytoplasmic. Residues 232–259 (IIFLVMAVFLLTQMPFNLMKFIRSTHWE) traverse the membrane as a helical segment. Residues 260–275 (YYAMTSFHYTIMVTEA) lie on the Extracellular side of the membrane. The chain crosses the membrane as a helical span at residues 276–293 (IAYLRACLNPVLYAFVSL). The Cytoplasmic segment spans residues 294–342 (KFRKNFWKLVKDIGCLPYLGVSHQWKSSEDNSKTFSASHNVEATSMFQL).

This sequence belongs to the G-protein coupled receptor 1 family. In terms of tissue distribution, expressed in lymphoid tissues and activated T cells.

The protein localises to the cell membrane. Functionally, receptor for the C-X-C chemokine CXCL16. Used as a coreceptor by SIVs and by strains of HIV-2 and m-tropic HIV-1. The protein is C-X-C chemokine receptor type 6 (CXCR6) of Homo sapiens (Human).